We begin with the raw amino-acid sequence, 385 residues long: MNRRRKLLIPLLFCGAMLTACDDKSAENTAAMTPEVGVVTLSPGSVNVLSELPGRTVPYEVAEIRPQVGGIIIKRNFIEGDKVNQGDSLYQIDPAPLQAELNSAKGSLAKALSTASNARITFNRQASLLKTNYVSRQDYDTARTQLNEAEANVTVAKAAVEQATINLQYANVTSPITGVSGKSSVTVGALVTANQADSLVTVQRLDPIYVDLTQSVQDFLRMKEEVASGQIKQVQGSTPVQLNLENGKRYSQTGTLKFSDPTVDETTGSVTLRAIFPNPNGDLLPGMYVTALVDEGSRQNVLLVPQEGVTHNAQGKATALILDKDDVVKLREIEASKAIGDQWVVTSGLQAGDRVIVSGLQRIRPGIKARAISSSQENASTESKQ.

The N-terminal stretch at 1–20 (MNRRRKLLIPLLFCGAMLTA) is a signal peptide. Cysteine 21 carries N-palmitoyl cysteine lipidation. Residue cysteine 21 is the site of S-diacylglycerol cysteine attachment.

This sequence belongs to the membrane fusion protein (MFP) (TC 8.A.1) family. Homotrimer. Part of the tripartite efflux system MdtEF-TolC, which is composed of an inner membrane transporter, MdtF, a membrane fusion protein, MdtE, and an outer membrane component, TolC. The complex forms a large protein conduit and can translocate molecules across both the inner and outer membranes.

It localises to the cell inner membrane. Part of the tripartite efflux system MdtEF-TolC, which confers resistance to various compounds. The protein is Multidrug resistance protein MdtE (mdtE) of Escherichia coli O157:H7.